The primary structure comprises 438 residues: 5-methylthioadenosine/S-adenosylhomocysteine deaminase (438 aa).

2 residues coordinate Zn(2+): histidine 66 and histidine 68. 3 residues coordinate substrate: glutamate 95, arginine 148, and histidine 188. Histidine 215 lines the Zn(2+) pocket. Residues glutamate 218 and aspartate 305 each coordinate substrate. A Zn(2+)-binding site is contributed by aspartate 305.

It belongs to the metallo-dependent hydrolases superfamily. MTA/SAH deaminase family. Zn(2+) serves as cofactor.

It catalyses the reaction S-adenosyl-L-homocysteine + H2O + H(+) = S-inosyl-L-homocysteine + NH4(+). The catalysed reaction is S-methyl-5'-thioadenosine + H2O + H(+) = S-methyl-5'-thioinosine + NH4(+). In terms of biological role, catalyzes the deamination of 5-methylthioadenosine and S-adenosyl-L-homocysteine into 5-methylthioinosine and S-inosyl-L-homocysteine, respectively. Is also able to deaminate adenosine. This is 5-methylthioadenosine/S-adenosylhomocysteine deaminase from Halalkalibacterium halodurans (strain ATCC BAA-125 / DSM 18197 / FERM 7344 / JCM 9153 / C-125) (Bacillus halodurans).